A 275-amino-acid chain; its full sequence is Transmembrane protein 45B (275 aa).

7 consecutive transmembrane segments (helical) span residues 7-27 (HALP…KYPL), 47-67 (IVEA…EQFV), 94-114 (LFFA…HVPL), 116-136 (VDRL…YYHV), 146-166 (IHSL…LEVI), 180-200 (LIIL…PPFG), and 212-232 (LMFI…IVAV). 2 positions are modified to phosphoserine: Ser-270 and Ser-272.

Belongs to the TMEM45 family. (Microbial infection) Interacts with sindbis virus nsP1 and nsP4; these interactions lead to viral RNA replication inhibition. In terms of assembly, (Microbial infection) Interacts with chikungunya virus nsP1 and nsP4; these interactions lead to viral RNA replication inhibition.

It is found in the endosome membrane. Its subcellular location is the lysosome membrane. It localises to the golgi apparatus. The protein resides in the trans-Golgi network membrane. Its function is as follows. Plays a role in innate immunity. Mechanistically, promotes alphaviruses RNA degradation by interacting with the viral polymerase nsP4 and the mRNA-capping enzyme nsP1 and thereby interfering with the interaction between viral RNA and nsP1. This is Transmembrane protein 45B (TMEM45B) from Homo sapiens (Human).